A 179-amino-acid polypeptide reads, in one-letter code: Translation initiation factor IF-3 (179 aa).

It belongs to the IF-3 family. Monomer.

It is found in the cytoplasm. Its function is as follows. IF-3 binds to the 30S ribosomal subunit and shifts the equilibrium between 70S ribosomes and their 50S and 30S subunits in favor of the free subunits, thus enhancing the availability of 30S subunits on which protein synthesis initiation begins. The chain is Translation initiation factor IF-3 from Leptospira interrogans serogroup Icterohaemorrhagiae serovar copenhageni (strain Fiocruz L1-130).